The sequence spans 181 residues: Biofilm-surface layer protein A (181 aa).

The first 28 residues, 1–28 (MKRKLLSSLAISALSLGLLVSAPTASFA), serve as a signal peptide directing secretion.

It belongs to the BslA/BslB family. Forms polymers.

It is found in the secreted. It localises to the cell wall. In terms of biological role, involved in biofilm formation. Self-polymerizes and forms a layer on the surface of biofilms that confers hydrophobicity to the biofilm. The layer is stable and capable of resistance to high mechanical force compression. Required for complex colony architecture. May function synergistically with exopolysaccharides and TasA amyloid fibers to facilitate the assembly of the biofilm matrix. The polypeptide is Biofilm-surface layer protein A (Bacillus subtilis (strain 168)).